Reading from the N-terminus, the 420-residue chain is Serine hydroxymethyltransferase (420 aa).

Residues L121 and 125-127 (GHL) contribute to the (6S)-5,6,7,8-tetrahydrofolate site. N6-(pyridoxal phosphate)lysine is present on K230.

This sequence belongs to the SHMT family. Homodimer. The cofactor is pyridoxal 5'-phosphate.

The protein localises to the cytoplasm. The enzyme catalyses (6R)-5,10-methylene-5,6,7,8-tetrahydrofolate + glycine + H2O = (6S)-5,6,7,8-tetrahydrofolate + L-serine. Its pathway is one-carbon metabolism; tetrahydrofolate interconversion. It participates in amino-acid biosynthesis; glycine biosynthesis; glycine from L-serine: step 1/1. Its function is as follows. Catalyzes the reversible interconversion of serine and glycine with tetrahydrofolate (THF) serving as the one-carbon carrier. This reaction serves as the major source of one-carbon groups required for the biosynthesis of purines, thymidylate, methionine, and other important biomolecules. Also exhibits THF-independent aldolase activity toward beta-hydroxyamino acids, producing glycine and aldehydes, via a retro-aldol mechanism. In Streptomyces avermitilis (strain ATCC 31267 / DSM 46492 / JCM 5070 / NBRC 14893 / NCIMB 12804 / NRRL 8165 / MA-4680), this protein is Serine hydroxymethyltransferase.